A 498-amino-acid chain; its full sequence is ATP synthase subunit beta, chloroplastic (498 aa).

172 to 179 (GGAGVGKT) serves as a coordination point for ATP.

Belongs to the ATPase alpha/beta chains family. In terms of assembly, F-type ATPases have 2 components, CF(1) - the catalytic core - and CF(0) - the membrane proton channel. CF(1) has five subunits: alpha(3), beta(3), gamma(1), delta(1), epsilon(1). CF(0) has four main subunits: a(1), b(1), b'(1) and c(9-12).

The protein resides in the plastid. Its subcellular location is the chloroplast thylakoid membrane. It catalyses the reaction ATP + H2O + 4 H(+)(in) = ADP + phosphate + 5 H(+)(out). Its function is as follows. Produces ATP from ADP in the presence of a proton gradient across the membrane. The catalytic sites are hosted primarily by the beta subunits. This chain is ATP synthase subunit beta, chloroplastic, found in Montinia caryophyllacea (Wild clove bush).